The following is a 347-amino-acid chain: S-adenosylmethionine:tRNA ribosyltransferase-isomerase (347 aa).

The protein belongs to the QueA family. As to quaternary structure, monomer.

The protein localises to the cytoplasm. It catalyses the reaction 7-aminomethyl-7-carbaguanosine(34) in tRNA + S-adenosyl-L-methionine = epoxyqueuosine(34) in tRNA + adenine + L-methionine + 2 H(+). It participates in tRNA modification; tRNA-queuosine biosynthesis. Functionally, transfers and isomerizes the ribose moiety from AdoMet to the 7-aminomethyl group of 7-deazaguanine (preQ1-tRNA) to give epoxyqueuosine (oQ-tRNA). This is S-adenosylmethionine:tRNA ribosyltransferase-isomerase from Methylococcus capsulatus (strain ATCC 33009 / NCIMB 11132 / Bath).